The primary structure comprises 227 residues: Phosphoglycolate phosphatase (227 aa).

The active-site Nucleophile is the Asp-9. Residues Asp-9, Asp-11, and Asp-171 each contribute to the Mg(2+) site.

This sequence belongs to the HAD-like hydrolase superfamily. CbbY/CbbZ/Gph/YieH family. Requires Mg(2+) as cofactor.

It catalyses the reaction 2-phosphoglycolate + H2O = glycolate + phosphate. It functions in the pathway organic acid metabolism; glycolate biosynthesis; glycolate from 2-phosphoglycolate: step 1/1. Specifically catalyzes the dephosphorylation of 2-phosphoglycolate. Is involved in the dissimilation of the intracellular 2-phosphoglycolate formed during the DNA repair of 3'-phosphoglycolate ends, a major class of DNA lesions induced by oxidative stress. This is Phosphoglycolate phosphatase from Mesorhizobium japonicum (strain LMG 29417 / CECT 9101 / MAFF 303099) (Mesorhizobium loti (strain MAFF 303099)).